The following is a 296-amino-acid chain: GTPase Era (296 aa).

In terms of domain architecture, Era-type G spans 2 to 171 (KAGFIAVVGR…LEALDPYLED (170 aa)). A G1 region spans residues 10–17 (GRPNVGKS). GTP is bound at residue 10–17 (GRPNVGKS). Residues 36-40 (GTTRD) are G2. The G3 stretch occupies residues 57–60 (DTPG). Residues 57 to 61 (DTPGI) and 120 to 123 (NKVD) contribute to the GTP site. Residues 120–123 (NKVD) form a G4 region. The tract at residues 150 to 152 (ASG) is G5. In terms of domain architecture, KH type-2 spans 202-279 (TRDEIPHSVA…YLGLWVKVKD (78 aa)).

Belongs to the TRAFAC class TrmE-Era-EngA-EngB-Septin-like GTPase superfamily. Era GTPase family. In terms of assembly, monomer.

The protein resides in the cytoplasm. The protein localises to the cell inner membrane. In terms of biological role, an essential GTPase that binds both GDP and GTP, with rapid nucleotide exchange. Plays a role in 16S rRNA processing and 30S ribosomal subunit biogenesis and possibly also in cell cycle regulation and energy metabolism. The polypeptide is GTPase Era (Fusobacterium nucleatum subsp. nucleatum (strain ATCC 25586 / DSM 15643 / BCRC 10681 / CIP 101130 / JCM 8532 / KCTC 2640 / LMG 13131 / VPI 4355)).